Here is a 262-residue protein sequence, read N- to C-terminus: Indole-3-glycerol phosphate synthase (262 aa).

The protein belongs to the TrpC family.

The enzyme catalyses 1-(2-carboxyphenylamino)-1-deoxy-D-ribulose 5-phosphate + H(+) = (1S,2R)-1-C-(indol-3-yl)glycerol 3-phosphate + CO2 + H2O. It functions in the pathway amino-acid biosynthesis; L-tryptophan biosynthesis; L-tryptophan from chorismate: step 4/5. The polypeptide is Indole-3-glycerol phosphate synthase (Staphylococcus epidermidis (strain ATCC 35984 / DSM 28319 / BCRC 17069 / CCUG 31568 / BM 3577 / RP62A)).